The sequence spans 233 residues: Large ribosomal subunit protein uL1 (233 aa).

Belongs to the universal ribosomal protein uL1 family. As to quaternary structure, part of the 50S ribosomal subunit.

In terms of biological role, binds directly to 23S rRNA. The L1 stalk is quite mobile in the ribosome, and is involved in E site tRNA release. Its function is as follows. Protein L1 is also a translational repressor protein, it controls the translation of the L11 operon by binding to its mRNA. The protein is Large ribosomal subunit protein uL1 of Aeromonas salmonicida (strain A449).